The following is a 174-amino-acid chain: Large ribosomal subunit protein uL10 (174 aa).

Belongs to the universal ribosomal protein uL10 family. Part of the ribosomal stalk of the 50S ribosomal subunit. The N-terminus interacts with L11 and the large rRNA to form the base of the stalk. The C-terminus forms an elongated spine to which L12 dimers bind in a sequential fashion forming a multimeric L10(L12)X complex.

Functionally, forms part of the ribosomal stalk, playing a central role in the interaction of the ribosome with GTP-bound translation factors. In Anaeromyxobacter dehalogenans (strain 2CP-1 / ATCC BAA-258), this protein is Large ribosomal subunit protein uL10.